A 555-amino-acid polypeptide reads, in one-letter code: Intraflagellar transport protein 56 (555 aa).

TPR repeat units lie at residues 57 to 90 (LKNL…EDPD), 151 to 184 (IEDQ…HRDY), and 393 to 426 (DDFN…KYRN).

Belongs to the IFT56 family. In terms of assembly, component of the IFT complex B.

It is found in the cell projection. It localises to the cilium. The protein resides in the flagellum. Functionally, component of the intraflagellar transport (IFT) complex B required for transport of proteins in the motile cilium. Required for transport of specific ciliary cargo proteins related to motility, while it is neither required for IFT complex B assembly or motion nor for cilium assembly. The protein is Intraflagellar transport protein 56 of Chlamydomonas reinhardtii (Chlamydomonas smithii).